We begin with the raw amino-acid sequence, 458 residues long: Ribulose bisphosphate carboxylase (458 aa).

Residue Asn-111 coordinates substrate. The Proton acceptor role is filled by Lys-166. Residue Lys-168 participates in substrate binding. Mg(2+) is bound by residues Lys-191, Asp-193, and Glu-194. At Lys-191 the chain carries N6-carboxylysine. His-287 (proton acceptor) is an active-site residue. Residues Arg-288, His-321, and Ser-368 each contribute to the substrate site.

The protein belongs to the RuBisCO large chain family. Type II subfamily. In terms of assembly, homodimer. Requires Mg(2+) as cofactor.

The enzyme catalyses 2 (2R)-3-phosphoglycerate + 2 H(+) = D-ribulose 1,5-bisphosphate + CO2 + H2O. It carries out the reaction D-ribulose 1,5-bisphosphate + O2 = 2-phosphoglycolate + (2R)-3-phosphoglycerate + 2 H(+). Functionally, ruBisCO catalyzes two reactions: the carboxylation of D-ribulose 1,5-bisphosphate, the primary event in carbon dioxide fixation, as well as the oxidative fragmentation of the pentose substrate. Both reactions occur simultaneously and in competition at the same active site. This chain is Ribulose bisphosphate carboxylase (cbbM), found in Rhodobacter capsulatus (strain ATCC BAA-309 / NBRC 16581 / SB1003).